The primary structure comprises 219 residues: Protein-L-isoaspartate O-methyltransferase (219 aa).

Serine 65 is a catalytic residue.

The protein belongs to the methyltransferase superfamily. L-isoaspartyl/D-aspartyl protein methyltransferase family. In terms of assembly, monomer.

It is found in the cytoplasm. The catalysed reaction is [protein]-L-isoaspartate + S-adenosyl-L-methionine = [protein]-L-isoaspartate alpha-methyl ester + S-adenosyl-L-homocysteine. Functionally, catalyzes the methyl esterification of L-isoaspartyl residues in peptides and proteins that result from spontaneous decomposition of normal L-aspartyl and L-asparaginyl residues. It plays a role in the repair and/or degradation of damaged proteins. This is Protein-L-isoaspartate O-methyltransferase (pcm) from Pyrococcus furiosus (strain ATCC 43587 / DSM 3638 / JCM 8422 / Vc1).